Here is a 254-residue protein sequence, read N- to C-terminus: UPF0246 protein BDI_1226 (254 aa).

This sequence belongs to the UPF0246 family.

The polypeptide is UPF0246 protein BDI_1226 (Parabacteroides distasonis (strain ATCC 8503 / DSM 20701 / CIP 104284 / JCM 5825 / NCTC 11152)).